Here is a 331-residue protein sequence, read N- to C-terminus: UPF0284 protein PF0303 (331 aa).

It belongs to the UPF0284 family.

In Pyrococcus furiosus (strain ATCC 43587 / DSM 3638 / JCM 8422 / Vc1), this protein is UPF0284 protein PF0303.